A 425-amino-acid chain; its full sequence is Nuclear hormone receptor family member nhr-13 (425 aa).

The segment at residues 5–83 (PNSCEVCSSS…IGMKPLLVKS (79 aa)) is a DNA-binding region (nuclear receptor). 2 consecutive NR C4-type zinc fingers follow at residues 11–30 (CSSS…CKAC) and 46–71 (CIDQ…LKKC). The tract at residues 108–148 (VKENSEEIQNDDDPQESDAEMENESTPGPSSEPSENVSAEN) is disordered. A compositionally biased stretch (acidic residues) spans 113–130 (EEIQNDDDPQESDAEMEN). The segment covering 131–142 (ESTPGPSSEPSE) has biased composition (low complexity). An NR LBD domain is found at 147 to 414 (ENQETVTKFL…KSMISLTSFW (268 aa)).

This sequence belongs to the nuclear hormone receptor family. In terms of assembly, may interact with nuclear hormone receptor nhr-49.

It is found in the nucleus. Its function is as follows. Orphan nuclear receptor. Involved in regulating fatty acid desaturase genes, acting in concert with nuclear hormone receptor nhr-49. This chain is Nuclear hormone receptor family member nhr-13 (nhr-13), found in Caenorhabditis elegans.